We begin with the raw amino-acid sequence, 138 residues long: Large ribosomal subunit protein uL16 (138 aa).

Residues Met-1 to Gln-13 show a composition bias toward basic residues. The tract at residues Met-1–Thr-22 is disordered.

It belongs to the universal ribosomal protein uL16 family. Part of the 50S ribosomal subunit.

Its function is as follows. Binds 23S rRNA and is also seen to make contacts with the A and possibly P site tRNAs. The polypeptide is Large ribosomal subunit protein uL16 (Polaromonas sp. (strain JS666 / ATCC BAA-500)).